A 159-amino-acid polypeptide reads, in one-letter code: Nucleotide-binding protein Pmen_0939 (159 aa).

The protein belongs to the YajQ family.

Functionally, nucleotide-binding protein. The polypeptide is Nucleotide-binding protein Pmen_0939 (Ectopseudomonas mendocina (strain ymp) (Pseudomonas mendocina)).